The primary structure comprises 195 residues: Interferon tau (195 aa).

A signal peptide spans 1–23; it reads MAFMLSLLMALVLVSYGLGGSLG. Cystine bridges form between Cys52/Cys162 and Cys87/Cys109.

This sequence belongs to the alpha/beta interferon family. IFN-alphaII subfamily.

It is found in the secreted. Functionally, paracrine hormone primarily responsible for maternal recognition of pregnancy. Interacts with endometrial receptors, probably type I interferon receptors, and blocks estrogen receptor expression, preventing the estrogen-induced increase in oxytocin receptor expression in the endometrium. This results in the suppression of the pulsatile endometrial release of the luteolytic hormone prostaglandin F2-alpha, hindering the regression of the corpus luteum (luteolysis) and therefore a return to ovarian cyclicity. This, and a possible direct effect of IFN-tau on prostaglandin synthesis, leads in turn to continued ovarian progesterone secretion, which stimulates the secretion by the endometrium of the nutrients required for the growth of the conceptus. In summary, displays particularly high antiviral and antiproliferative potency concurrently with particular weak cytotoxicity, high antiluteolytic activity and immunomodulatory properties. In contrast with other IFNs, IFN-tau is not virally inducible. This Giraffa camelopardalis (Giraffe) protein is Interferon tau (IFNT).